Reading from the N-terminus, the 734-residue chain is Photosystem I P700 chlorophyll a apoprotein A2 (734 aa).

8 consecutive transmembrane segments (helical) span residues 46–69, 135–158, 175–199, 273–291, 330–353, 369–395, 417–439, and 517–535; these read IFAS…FHVA, LYTG…LHLQ, LNHH…HVAI, MAHH…GHMY, IHFQ…QHMY, AALY…IFFI, AIIS…LYVH, and FLVH…LILV. [4Fe-4S] cluster is bound by residues Cys559 and Cys568. A run of 2 helical transmembrane segments spans residues 575–596 and 643–665; these read AFYL…YWHW and LSVW…MFLI. Residues His654, Met662, and Tyr670 each contribute to the chlorophyll a site. Trp671 provides a ligand contact to phylloquinone. Residues 707–727 traverse the membrane as a helical segment; the sequence is LVGLAHFSVGYIFTYAAFLIA.

It belongs to the PsaA/PsaB family. In terms of assembly, the PsaA/B heterodimer binds the P700 chlorophyll special pair and subsequent electron acceptors. PSI consists of a core antenna complex that captures photons, and an electron transfer chain that converts photonic excitation into a charge separation. The eukaryotic PSI reaction center is composed of at least 11 subunits. The cofactor is P700 is a chlorophyll a/chlorophyll a' dimer, A0 is one or more chlorophyll a, A1 is one or both phylloquinones and FX is a shared 4Fe-4S iron-sulfur center..

It localises to the plastid. It is found in the chloroplast thylakoid membrane. It carries out the reaction reduced [plastocyanin] + hnu + oxidized [2Fe-2S]-[ferredoxin] = oxidized [plastocyanin] + reduced [2Fe-2S]-[ferredoxin]. Functionally, psaA and PsaB bind P700, the primary electron donor of photosystem I (PSI), as well as the electron acceptors A0, A1 and FX. PSI is a plastocyanin-ferredoxin oxidoreductase, converting photonic excitation into a charge separation, which transfers an electron from the donor P700 chlorophyll pair to the spectroscopically characterized acceptors A0, A1, FX, FA and FB in turn. Oxidized P700 is reduced on the lumenal side of the thylakoid membrane by plastocyanin. The protein is Photosystem I P700 chlorophyll a apoprotein A2 of Nandina domestica (Heavenly bamboo).